The primary structure comprises 918 residues: MSAPPLLRPPSPLLPAAAAVAAAAAALVPGSGPAPFPAPGAAPAGGISFHLQIGLSREPVLLLQDSSGDYSLAHVREMACSIVDQKFPECGFYGLYDKILLFRHDPASENILQLVKIASDIQEGDLIEVVLSASATFEDFQIRPHALFVHSYRAPAFCDHCGEMLWGLVRQGLKCEGCGLNYHKRCAFKIPNNCSGVRRRRLSNVSLTGLGTVRTASAEFSTSAPDEPLLSPVSPGFEQKSPSESFIGREKRSNSQSYVGRPIQLDKLLMSKVKVPHTFVIHSYTRPTVCQFCKKLLKGLFRQGLQCKDCRFNCHKRCAPKVPNNCLGEVTINGELLSPGAESDVVMEEGSDDNDSERNSGLMDDMDEAMVQDTEMALAEGQSDGAEMQDPDADQEDSNRTISPSTSNNIPLMRVVQSVKHTKRRSSTVMKEGWMVHYTSKDTLRKRHYWRLDSKSITLFQNDTGSRYYKEIPLSEILCLEPAKPSALIPTGANPHCFEITTANVVYYVGENVVNPSSPPPNNSVPPSGIGTDVARMWEVAIQHALMPVIPKGSSVGSGTNSHKDISVSISVSNSQIQENVDISTVYQIFPDEVLGSGQFGIVYGGKHRKTGRDVAIKIIDKLRFPTKQESQLRNEVAILQNLHHPGVVNLECMFETPERVFVVMEKLHGDMLEMILSSEKGRLPEHITKFLITQILVALRHLHFKNIVHCDLKPENVLLASADPFPQVKLCDFGFARIIGEKSFRRSVVGTPAYLAPEVLRNKGYNRSLDMWSVGVIIYVSLSGTFPFNEDEDIHDQIQNAAFMYPPNPWKEISHEAIDLINNLLQVKMRKRYSVDKTLSHPWLQDYQTWLDLRELECRIGERYITHESDDSRWEQYAGEQGLQYPAHLINLSASHGDSPEAEEREMKALSERVSIL.

Y93 carries the post-translational modification Phosphotyrosine. The Phorbol-ester/DAG-type 1 zinc-finger motif lies at 144 to 194 (PHALFVHSYRAPAFCDHCGEMLWGLVRQGLKCEGCGLNYHKRCAFKIPNNC). 4 positions are modified to phosphoserine: S203, S206, S217, and S221. The segment at 276–326 (PHTFVIHSYTRPTVCQFCKKLLKGLFRQGLQCKDCRFNCHKRCAPKVPNNC) adopts a Phorbol-ester/DAG-type 2 zinc-finger fold. Disordered regions lie at residues 338-362 (SPGAESDVVMEEGSDDNDSERNSGL) and 380-408 (EGQSDGAEMQDPDADQEDSNRTISPSTSN). Composition is skewed to acidic residues over residues 345–355 (VVMEEGSDDND) and 387–396 (EMQDPDADQE). The residue at position 351 (S351) is a Phosphoserine. Residues S403 and S407 each carry the phosphoserine; by MAPK13 modification. A PH domain is found at 428–547 (TVMKEGWMVH…WEVAIQHALM (120 aa)). Position 438 is a phosphotyrosine (Y438). A Phosphoserine modification is found at S454. Position 469 is a phosphotyrosine; by ABL (Y469). Y508 bears the Phosphotyrosine mark. S554 is modified (phosphoserine). The Protein kinase domain occupies 589–845 (IFPDEVLGSG…VDKTLSHPWL (257 aa)). Residues 595 to 603 (LGSGQFGIV) and K618 contribute to the ATP site. The active-site Proton acceptor is D712. The residue at position 744 (S744) is a Phosphoserine; by PKC/PRKCD. Phosphoserine; by autocatalysis and PKC/PRKCD is present on S748. Phosphotyrosine is present on Y755. S916 carries the post-translational modification Phosphoserine; by autocatalysis.

It belongs to the protein kinase superfamily. CAMK Ser/Thr protein kinase family. PKD subfamily. Interacts (via N-terminus) with ADAP1/CENTA1. Interacts with MAPK13. Interacts with DAPK1 in an oxidative stress-regulated manner. Interacts with USP28; the interaction induces phosphorylation of USP28 and activated KRAS-mediated stabilization of ZNF304. Interacts with AKAP13 (via C-terminal domain). The cofactor is Mg(2+). Phosphorylated at Ser-403 and Ser-407 by MAPK13 during regulation of insulin secretion in pancreatic beta cells. Phosphorylated by DAPK1. Phosphorylated at Tyr-93 and by ABL at Tyr-469, which primes the kinase in response to oxidative stress, and promotes a second step activating phosphorylation at Ser-744/Ser-748 by PKRD. Phosphorylated on Ser-916 upon S.enterica infection in macrophages.

The protein resides in the cytoplasm. The protein localises to the cell membrane. It localises to the golgi apparatus. It is found in the trans-Golgi network. It carries out the reaction L-seryl-[protein] + ATP = O-phospho-L-seryl-[protein] + ADP + H(+). The enzyme catalyses L-threonyl-[protein] + ATP = O-phospho-L-threonyl-[protein] + ADP + H(+). With respect to regulation, activated by DAG and phorbol esters. Phorbol-ester/DAG-type domain 1 binds DAG with high affinity and appears to play the dominant role in mediating translocation to the cell membrane and trans-Golgi network. Phorbol-ester/DAG-type domain 2 binds phorbol ester with higher affinity. Autophosphorylation of Ser-748 and phosphorylation of Ser-744 by PKC relieves auto-inhibition by the PH domain. Phosphorylation on Tyr-469 by the SRC-ABL1 pathway in response to oxidative stress, is also required for activation. Activated by DAPK1 under oxidative stress. Its function is as follows. Serine/threonine-protein kinase that converts transient diacylglycerol (DAG) signals into prolonged physiological effects downstream of PKC, and is involved in the regulation of MAPK8/JNK1 and Ras signaling, Golgi membrane integrity and trafficking, cell survival through NF-kappa-B activation, cell migration, cell differentiation by mediating HDAC7 nuclear export, cell proliferation via MAPK1/3 (ERK1/2) signaling, and plays a role in cardiac hypertrophy, VEGFA-induced angiogenesis, genotoxic-induced apoptosis and flagellin-stimulated inflammatory response. Phosphorylates the epidermal growth factor receptor (EGFR) on dual threonine residues, which leads to the suppression of epidermal growth factor (EGF)-induced MAPK8/JNK1 activation and subsequent JUN phosphorylation. Phosphorylates RIN1, inducing RIN1 binding to 14-3-3 proteins YWHAB, YWHAE and YWHAZ and increased competition with RAF1 for binding to GTP-bound form of Ras proteins (NRAS, HRAS and KRAS). Acts downstream of the heterotrimeric G-protein beta/gamma-subunit complex to maintain the structural integrity of the Golgi membranes, and is required for protein transport along the secretory pathway. In the trans-Golgi network (TGN), regulates the fission of transport vesicles that are on their way to the plasma membrane. May act by activating the lipid kinase phosphatidylinositol 4-kinase beta (PI4KB) at the TGN for the local synthesis of phosphorylated inositol lipids, which induces a sequential production of DAG, phosphatidic acid (PA) and lyso-PA (LPA) that are necessary for membrane fission and generation of specific transport carriers to the cell surface. Under oxidative stress, is phosphorylated at Tyr-469 via SRC-ABL1 and contributes to cell survival by activating IKK complex and subsequent nuclear translocation and activation of NFKB1. Involved in cell migration by regulating integrin alpha-5/beta-3 recycling and promoting its recruitment in newly forming focal adhesion. In osteoblast differentiation, mediates the bone morphogenetic protein 2 (BMP2)-induced nuclear export of HDAC7, which results in the inhibition of HDAC7 transcriptional repression of RUNX2. In neurons, plays an important role in neuronal polarity by regulating the biogenesis of TGN-derived dendritic vesicles, and is involved in the maintenance of dendritic arborization and Golgi structure in hippocampal cells. May potentiate mitogenesis induced by the neuropeptide bombesin or vasopressin by mediating an increase in the duration of MAPK1/3 (ERK1/2) signaling, which leads to accumulation of immediate-early gene products including FOS that stimulate cell cycle progression. Plays an important role in the proliferative response induced by low calcium in keratinocytes, through sustained activation of MAPK1/3 (ERK1/2) pathway. Downstream of novel PKC signaling, plays a role in cardiac hypertrophy by phosphorylating HDAC5, which in turn triggers XPO1/CRM1-dependent nuclear export of HDAC5, MEF2A transcriptional activation and induction of downstream target genes that promote myocyte hypertrophy and pathological cardiac remodeling. Mediates cardiac troponin I (TNNI3) phosphorylation at the PKA sites, which results in reduced myofilament calcium sensitivity, and accelerated crossbridge cycling kinetics. The PRKD1-HDAC5 pathway is also involved in angiogenesis by mediating VEGFA-induced specific subset of gene expression, cell migration, and tube formation. In response to VEGFA, is necessary and required for HDAC7 phosphorylation which induces HDAC7 nuclear export and endothelial cell proliferation and migration. During apoptosis induced by cytarabine and other genotoxic agents, PRKD1 is cleaved by caspase-3 at Asp-378, resulting in activation of its kinase function and increased sensitivity of cells to the cytotoxic effects of genotoxic agents. In epithelial cells, is required for transducing flagellin-stimulated inflammatory responses by binding and phosphorylating TLR5, which contributes to MAPK14/p38 activation and production of inflammatory cytokines. Acts as an activator of NLRP3 inflammasome assembly by mediating phosphorylation of NLRP3. May play a role in inflammatory response by mediating activation of NF-kappa-B. May be involved in pain transmission by directly modulating TRPV1 receptor. Plays a role in activated KRAS-mediated stabilization of ZNF304 in colorectal cancer (CRC) cells. Regulates nuclear translocation of transcription factor TFEB in macrophages upon live S.enterica infection. This Rattus norvegicus (Rat) protein is Serine/threonine-protein kinase D1 (Prkd1).